Here is a 246-residue protein sequence, read N- to C-terminus: 3-deoxy-manno-octulosonate cytidylyltransferase (246 aa).

Belongs to the KdsB family.

It is found in the cytoplasm. It catalyses the reaction 3-deoxy-alpha-D-manno-oct-2-ulosonate + CTP = CMP-3-deoxy-beta-D-manno-octulosonate + diphosphate. It participates in nucleotide-sugar biosynthesis; CMP-3-deoxy-D-manno-octulosonate biosynthesis; CMP-3-deoxy-D-manno-octulosonate from 3-deoxy-D-manno-octulosonate and CTP: step 1/1. It functions in the pathway bacterial outer membrane biogenesis; lipopolysaccharide biosynthesis. Activates KDO (a required 8-carbon sugar) for incorporation into bacterial lipopolysaccharide in Gram-negative bacteria. This Rickettsia africae (strain ESF-5) protein is 3-deoxy-manno-octulosonate cytidylyltransferase.